A 157-amino-acid chain; its full sequence is Transcriptional repressor NrdR (157 aa).

Residues 3 to 34 (CPFCGHEDTQVKDSRPTDDGTAIRRRRSCTAC) fold into a zinc finger. The 91-residue stretch at 49 to 139 (LIVVKTDQRR…VYRNFSDAGD (91 aa)) folds into the ATP-cone domain.

It belongs to the NrdR family. The cofactor is Zn(2+).

Its function is as follows. Negatively regulates transcription of bacterial ribonucleotide reductase nrd genes and operons by binding to NrdR-boxes. In Granulibacter bethesdensis (strain ATCC BAA-1260 / CGDNIH1), this protein is Transcriptional repressor NrdR.